The chain runs to 467 residues: Cysteine--tRNA ligase (467 aa).

A Zn(2+)-binding site is contributed by Cys-29. The 'HIGH' region signature appears at 31-41 (PTVYDDSHLGH). A disordered region spans residues 155-174 (KLSGRGEDLEQVSRIESSEE). The segment covering 158–174 (GRGEDLEQVSRIESSEE) has biased composition (basic and acidic residues). The Zn(2+) site is built by Cys-210, His-239, and Glu-243. The 'KMSKS' region motif lies at 271–275 (KMSKS). Residue Lys-274 participates in ATP binding.

The protein belongs to the class-I aminoacyl-tRNA synthetase family. In terms of assembly, monomer. Zn(2+) serves as cofactor.

It localises to the cytoplasm. The enzyme catalyses tRNA(Cys) + L-cysteine + ATP = L-cysteinyl-tRNA(Cys) + AMP + diphosphate. This Wolinella succinogenes (strain ATCC 29543 / DSM 1740 / CCUG 13145 / JCM 31913 / LMG 7466 / NCTC 11488 / FDC 602W) (Vibrio succinogenes) protein is Cysteine--tRNA ligase.